Consider the following 196-residue polypeptide: Probable malonic semialdehyde reductase RutE (196 aa).

Belongs to the nitroreductase family. HadB/RutE subfamily. FMN serves as cofactor.

It catalyses the reaction 3-hydroxypropanoate + NADP(+) = 3-oxopropanoate + NADPH + H(+). May reduce toxic product malonic semialdehyde to 3-hydroxypropionic acid, which is excreted. This is Probable malonic semialdehyde reductase RutE from Shigella flexneri serotype 5b (strain 8401).